The primary structure comprises 373 residues: Ras association domain-containing protein 7 (373 aa).

Residues 6 to 89 form the Ras-associating domain; that stretch reads AAMELKVWVD…VQFVLRRTGP (84 aa). The disordered stretch occupies residues 122–150; sequence CEPRKTLTPEPAPSLSRPGPAAPVTPTPG. Coiled coils occupy residues 175 to 227 and 248 to 297; these read WEQE…AAEA and QERQ…QFIQ. The disordered stretch occupies residues 300 to 356; it reads GAALPPPPRPDRGPPGTQGPLPPAREESLLGAPSESHAGAQPRPRGGPHDAELLEVA.

In terms of assembly, interacts with MAP2K7 and GTP-bound NRAS. In terms of processing, polyubiquitinated and degraded by the proteasome upon prolonged stress stimuli.

The protein resides in the cytoplasm. It is found in the cytoskeleton. It localises to the microtubule organizing center. The protein localises to the centrosome. Negatively regulates stress-induced JNK activation and apoptosis by promoting MAP2K7 phosphorylation and inhibiting its ability to activate JNK. Following prolonged stress, anti-apoptotic effect stops because of degradation of RASSF7 protein via the ubiquitin-proteasome pathway. Required for the activation of AURKB and chromosomal congression during mitosis where it stimulates microtubule polymerization. The chain is Ras association domain-containing protein 7 (RASSF7) from Homo sapiens (Human).